A 144-amino-acid polypeptide reads, in one-letter code: Large ribosomal subunit protein uL13 (144 aa).

This sequence belongs to the universal ribosomal protein uL13 family. In terms of assembly, part of the 50S ribosomal subunit.

Functionally, this protein is one of the early assembly proteins of the 50S ribosomal subunit, although it is not seen to bind rRNA by itself. It is important during the early stages of 50S assembly. This is Large ribosomal subunit protein uL13 from Magnetococcus marinus (strain ATCC BAA-1437 / JCM 17883 / MC-1).